Here is a 189-residue protein sequence, read N- to C-terminus: MSGTLPLAMTASESFVGMQVLAQDKEVKATFIALDRKLPANLKVPYMKNAKYRTCICPSSNHLVDDCVCEDVIIAYTAHRNNAVAALLYSDGNVIHRSGTLKPKSQNRFDLRGFLTSVNPGESSKAEAGTSKSTQKAYDRKDKSPSKGKNSKKGGKKSSSERKRKEYSSNSETDLSSDSDANTRKSKRK.

The C4-type zinc-finger motif lies at 55–69 (CICPSSNHLVDDCVC). The disordered stretch occupies residues 114-189 (FLTSVNPGES…DANTRKSKRK (76 aa)). Basic and acidic residues predominate over residues 158 to 167 (SSSERKRKEY). A compositionally biased stretch (low complexity) spans 168 to 180 (SSNSETDLSSDSD).

This sequence belongs to the phytoreovirus RNA-binding protein family.

It localises to the host cytoplasm. Constituent of viral factories. Binds to ssRNA and dsRNA. This Alopecurus aequalis (Barnyard grass) protein is RNA-binding protein.